A 96-amino-acid polypeptide reads, in one-letter code: Neurotoxin beta-KTx 31.1 (96 aa).

A signal peptide spans 1–21 (MQAKRTILLLLLLGMVALSSC). Residues 22 to 29 (GLREKHVQ) constitute a propeptide that is removed on maturation. In terms of domain architecture, BetaSPN-type CS-alpha/beta spans 56–93 (QYGCPIIKDYCSFHCNDLEKHEGYCHGTKCKCNIPNQY). 3 cysteine pairs are disulfide-bonded: Cys-59–Cys-80, Cys-66–Cys-85, and Cys-70–Cys-87.

Belongs to the long chain scorpion toxin family. Class 1 subfamily. Expressed by the venom gland.

The protein resides in the secreted. In terms of biological role, inhibits voltage-gated potassium channel. The chain is Neurotoxin beta-KTx 31.1 from Lychas mucronatus (Chinese swimming scorpion).